The following is a 540-amino-acid chain: Chaperonin GroEL 4 (540 aa).

Residues 29 to 32 (TLGP), 86 to 90 (DGTTT), glycine 413, 477 to 479 (NAA), and aspartate 493 contribute to the ATP site.

This sequence belongs to the chaperonin (HSP60) family. As to quaternary structure, forms a cylinder of 14 subunits composed of two heptameric rings stacked back-to-back. Interacts with the co-chaperonin GroES.

It localises to the cytoplasm. The enzyme catalyses ATP + H2O + a folded polypeptide = ADP + phosphate + an unfolded polypeptide.. Functionally, together with its co-chaperonin GroES, plays an essential role in assisting protein folding. The GroEL-GroES system forms a nano-cage that allows encapsulation of the non-native substrate proteins and provides a physical environment optimized to promote and accelerate protein folding. The chain is Chaperonin GroEL 4 from Frankia casuarinae (strain DSM 45818 / CECT 9043 / HFP020203 / CcI3).